Reading from the N-terminus, the 239-residue chain is Ribosomal RNA small subunit methyltransferase G (239 aa).

Residues glycine 95, leucine 100, glutamate 118–threonine 120, alanine 146–glutamate 147, and arginine 164 each bind S-adenosyl-L-methionine.

It belongs to the methyltransferase superfamily. RNA methyltransferase RsmG family.

It localises to the cytoplasm. The catalysed reaction is guanosine(527) in 16S rRNA + S-adenosyl-L-methionine = N(7)-methylguanosine(527) in 16S rRNA + S-adenosyl-L-homocysteine. Its function is as follows. Specifically methylates the N7 position of guanine in position 527 of 16S rRNA. This chain is Ribosomal RNA small subunit methyltransferase G, found in Sorangium cellulosum (strain So ce56) (Polyangium cellulosum (strain So ce56)).